The primary structure comprises 623 residues: Chaperone protein HtpG (623 aa).

The interval 1–336 is a; substrate-binding; that stretch reads MVSKQQTMGF…ASDLPLNISR (336 aa). The tract at residues 337 to 550 is b; that stretch reads EILQDNKQVE…EQDMGLEMQR (214 aa). A c region spans residues 551 to 623; that stretch reads ILQAAGQQVP…NRVNRLLVSS (73 aa).

The protein belongs to the heat shock protein 90 family. As to quaternary structure, homodimer.

Its subcellular location is the cytoplasm. Molecular chaperone. Has ATPase activity. This Legionella pneumophila subsp. pneumophila (strain Philadelphia 1 / ATCC 33152 / DSM 7513) protein is Chaperone protein HtpG.